The sequence spans 136 residues: Phospholipase A2 (136 aa).

3 residues coordinate Ca(2+): Trp-8, Gly-10, and Gly-12. Intrachain disulfides connect Cys-9-Cys-31, Cys-30-Cys-70, Cys-37-Cys-63, Cys-61-Cys-95, and Cys-105-Cys-117. Residue Asn-16 is glycosylated (N-linked (GlcNAc...) asparagine). His-34 is a catalytic residue. Residue Asp-35 coordinates Ca(2+). Residue Asp-64 is part of the active site.

The protein belongs to the phospholipase A2 family. The cofactor is Ca(2+). In terms of tissue distribution, expressed by the venom gland.

The protein localises to the secreted. The enzyme catalyses a 1,2-diacyl-sn-glycero-3-phosphocholine + H2O = a 1-acyl-sn-glycero-3-phosphocholine + a fatty acid + H(+). In terms of biological role, PLA2 catalyzes the calcium-dependent hydrolysis of the 2-acyl groups in 3-sn-phosphoglycerides. The chain is Phospholipase A2 from Bombus terrestris (Buff-tailed bumblebee).